A 307-amino-acid chain; its full sequence is Lactamase-like protein vrtG (307 aa).

Residues His-97, His-99, Asp-101, and His-102 each contribute to the Zn(2+) site. The active-site Proton donor/acceptor is the Asp-101.

The protein belongs to the metallo-beta-lactamase superfamily. The cofactor is Zn(2+).

It functions in the pathway secondary metabolite biosynthesis; terpenoid biosynthesis. Its function is as follows. Lactamase-like protein; part of the gene cluster that mediates the biosynthesis of viridicatumtoxin, a tetracycline-like fungal meroterpenoid with a unique, fused spirobicyclic ring system. The first step of the pathway is the production of the malonamoyl-CoA starter unit for the polyketide synthase vrtA. The aldolase vrtJ may be involved in the synthesis of the malonamate substrate for malonamoyl-CoA synthetase vrtB. The polyketide synthase vrtA then may utilize the malonamoyl-CoA starter unit, followed by sequential condensation of eight malonyl-CoA units to form the polyketide backbone. The cyclization of the last ring could be mediated by the lactamase-like protein vrtG. The proposed post-PKS tailoring steps are a hydroxylation at C5 catalyzed the cytochrome P450 monooxygenase vrtE, a hydroxylation at C12a catalyzed by VrtH and/or VrtI, and an O-methylation by the O-methyltransferase vrtF. VrtC is then proposed to catalyze the transfer of a geranyl group synthesized by vrtD to the aromatic C ring of the tetracyclic polyketide intermediate of viridicatumtoxin to yield previridicatumtoxin. Finally, the cytochrome P450 monooxygenase vrtK catalyzes the spirocyclization of the geranyl moiety of previridicatumtoxin to afford viridicatumtoxin. This is Lactamase-like protein vrtG from Penicillium aethiopicum.